The chain runs to 252 residues: tRNA pseudouridine synthase A (252 aa).

Residue Asp52 is the Nucleophile of the active site. Tyr110 serves as a coordination point for substrate.

The protein belongs to the tRNA pseudouridine synthase TruA family. In terms of assembly, homodimer.

It catalyses the reaction uridine(38/39/40) in tRNA = pseudouridine(38/39/40) in tRNA. Functionally, formation of pseudouridine at positions 38, 39 and 40 in the anticodon stem and loop of transfer RNAs. The chain is tRNA pseudouridine synthase A from Blochmanniella floridana.